Consider the following 151-residue polypeptide: 3-hydroxyacyl-[acyl-carrier-protein] dehydratase FabZ (151 aa).

His54 is an active-site residue.

It belongs to the thioester dehydratase family. FabZ subfamily.

It is found in the cytoplasm. It carries out the reaction a (3R)-hydroxyacyl-[ACP] = a (2E)-enoyl-[ACP] + H2O. Functionally, involved in unsaturated fatty acids biosynthesis. Catalyzes the dehydration of short chain beta-hydroxyacyl-ACPs and long chain saturated and unsaturated beta-hydroxyacyl-ACPs. This chain is 3-hydroxyacyl-[acyl-carrier-protein] dehydratase FabZ, found in Blochmanniella floridana.